Here is a 241-residue protein sequence, read N- to C-terminus: Large ribosomal subunit protein uL30 (241 aa).

The tract at residues Met1–Ala25 is disordered.

Belongs to the universal ribosomal protein uL30 family.

The protein is Large ribosomal subunit protein uL30 (RPL7) of Debaryomyces hansenii (strain ATCC 36239 / CBS 767 / BCRC 21394 / JCM 1990 / NBRC 0083 / IGC 2968) (Yeast).